Here is a 424-residue protein sequence, read N- to C-terminus: UPF0229 protein PputGB1_0427 (424 aa).

The segment at 81-107 (EFTAGEHIPRPQGGGGGGGGRGKAGNS) is disordered. The segment covering 92–107 (QGGGGGGGGRGKAGNS) has biased composition (gly residues).

This sequence belongs to the UPF0229 family.

The chain is UPF0229 protein PputGB1_0427 from Pseudomonas putida (strain GB-1).